A 162-amino-acid polypeptide reads, in one-letter code: 2-C-methyl-D-erythritol 2,4-cyclodiphosphate synthase (162 aa).

Positions 10 and 12 each coordinate a divalent metal cation. 4-CDP-2-C-methyl-D-erythritol 2-phosphate is bound by residues 10-12 (DVH) and 36-37 (HS). An a divalent metal cation-binding site is contributed by histidine 44. 4-CDP-2-C-methyl-D-erythritol 2-phosphate-binding positions include 58–60 (DIG), 63–67 (FSDTD), and arginine 144.

Belongs to the IspF family. Homotrimer. A divalent metal cation is required as a cofactor.

It catalyses the reaction 4-CDP-2-C-methyl-D-erythritol 2-phosphate = 2-C-methyl-D-erythritol 2,4-cyclic diphosphate + CMP. The protein operates within isoprenoid biosynthesis; isopentenyl diphosphate biosynthesis via DXP pathway; isopentenyl diphosphate from 1-deoxy-D-xylulose 5-phosphate: step 4/6. Involved in the biosynthesis of isopentenyl diphosphate (IPP) and dimethylallyl diphosphate (DMAPP), two major building blocks of isoprenoid compounds. Catalyzes the conversion of 4-diphosphocytidyl-2-C-methyl-D-erythritol 2-phosphate (CDP-ME2P) to 2-C-methyl-D-erythritol 2,4-cyclodiphosphate (ME-CPP) with a corresponding release of cytidine 5-monophosphate (CMP). The chain is 2-C-methyl-D-erythritol 2,4-cyclodiphosphate synthase from Burkholderia mallei (strain NCTC 10247).